The primary structure comprises 306 residues: Ornithine carbamoyltransferase (306 aa).

Carbamoyl phosphate contacts are provided by residues 51–54, Q78, R102, and 129–132; these read STRT and HPVQ. L-ornithine-binding positions include N159, D223, and 227-228; that span reads SM. Carbamoyl phosphate-binding positions include 263–264 and R291; that span reads CL.

It belongs to the aspartate/ornithine carbamoyltransferase superfamily. OTCase family.

It localises to the cytoplasm. The enzyme catalyses carbamoyl phosphate + L-ornithine = L-citrulline + phosphate + H(+). It participates in amino-acid biosynthesis; L-arginine biosynthesis; L-arginine from L-ornithine and carbamoyl phosphate: step 1/3. In terms of biological role, reversibly catalyzes the transfer of the carbamoyl group from carbamoyl phosphate (CP) to the N(epsilon) atom of ornithine (ORN) to produce L-citrulline. The sequence is that of Ornithine carbamoyltransferase from Sulfurovum sp. (strain NBC37-1).